Consider the following 132-residue polypeptide: Small ribosomal subunit protein uS8 (132 aa).

Belongs to the universal ribosomal protein uS8 family. As to quaternary structure, part of the 30S ribosomal subunit. Contacts proteins S5 and S12.

One of the primary rRNA binding proteins, it binds directly to 16S rRNA central domain where it helps coordinate assembly of the platform of the 30S subunit. This is Small ribosomal subunit protein uS8 from Brucella melitensis biotype 1 (strain ATCC 23456 / CCUG 17765 / NCTC 10094 / 16M).